We begin with the raw amino-acid sequence, 142 residues long: Large ribosomal subunit protein bL17 (142 aa).

It belongs to the bacterial ribosomal protein bL17 family. In terms of assembly, part of the 50S ribosomal subunit. Contacts protein L32.

The chain is Large ribosomal subunit protein bL17 from Chlamydia pneumoniae (Chlamydophila pneumoniae).